The primary structure comprises 76 residues: Repressor protein of division inhibition gene dicB (76 aa).

A DNA-binding region spans residues 13-33 (KTKLAQAAGIRLASLYSWKGD).

Its function is as follows. This protein is a repressor of division inhibition gene dicB. This Escherichia coli (strain K12) protein is Repressor protein of division inhibition gene dicB (dicC).